A 251-amino-acid polypeptide reads, in one-letter code: Probable transcriptional regulatory protein MMAR_2098 (251 aa).

It belongs to the TACO1 family.

The protein localises to the cytoplasm. This is Probable transcriptional regulatory protein MMAR_2098 from Mycobacterium marinum (strain ATCC BAA-535 / M).